The sequence spans 229 residues: Adapter protein MecA (229 aa).

It belongs to the MecA family. Homodimer.

In terms of biological role, enables the recognition and targeting of unfolded and aggregated proteins to the ClpC protease or to other proteins involved in proteolysis. The sequence is that of Adapter protein MecA from Latilactobacillus sakei subsp. sakei (strain 23K) (Lactobacillus sakei subsp. sakei).